The primary structure comprises 440 residues: MVMTRRIFFSWFIVICSLWLSSFSSVHAKLKGTISSADFNPIPIAITDFVSNDSIGLKIAAVVTADLERSGLFLPLDKASFFEKISNPNSQPHFFHWQKIRAQGLVTGQVIRENDGRLRVDFRLWDVFGHQQLKGRRFYTATERWRRVAHMIADEIYSEMTGESGYFDTRIVFIDETGPQNARIKRLAIMDQDGANLIYISDGSELVLTPRFSPKRQEITYMAYERNQPPHVYLQQIEMGQRELIGTFKNMTIAPRFSSDGQKVIMSLLQNNGSANLYTMDLRTRMMTRLTTTSAIDTSASYSPDGTQIVFSSDRSGKPQIYTMNADGSNLQRISANEGSYSTPIWSPRGDYIAFTKQLEGQFSIGVMRPDGKGERILTTGFHNEGPTWAPNGRVLMFFRKNPGMGPKIYTIDITGRNERQLPTPNDASDPAWSPLLNMQ.

Positions 1–28 (MVMTRRIFFSWFIVICSLWLSSFSSVHA) are cleaved as a signal peptide. A disordered region spans residues 417–440 (RNERQLPTPNDASDPAWSPLLNMQ).

It belongs to the TolB family. As to quaternary structure, the Tol-Pal system is composed of five core proteins: the inner membrane proteins TolA, TolQ and TolR, the periplasmic protein TolB and the outer membrane protein Pal. They form a network linking the inner and outer membranes and the peptidoglycan layer.

The protein localises to the periplasm. Functionally, part of the Tol-Pal system, which plays a role in outer membrane invagination during cell division and is important for maintaining outer membrane integrity. The polypeptide is Tol-Pal system protein TolB (Bartonella quintana (strain Toulouse) (Rochalimaea quintana)).